Here is a 338-residue protein sequence, read N- to C-terminus: MLTERQLLILQTIIDDFIGSAQPVGSRTLAKKDEITFSSATIRNEMADLEELGFIEKTHSSSGRVPSEKGYRFYVDHLLAPQNLPNAEIVQIKDLFAERIFEAEKIAQQSAQILSELTNYTAIVLGPKLSTNKLKNVQIVPLDRQTAVAIIVTDTGHVQSKTITVPESVDLSDLEKMVNILNEKLSGVPMEELHNKIFKEIVTVLRGYVHNYDSAIKMLDGTFQVPLSEKIYFGGKANMLSQPEFHDIQKVRSLLTMIDNEAEFYDILRHKQVGIQVKIGRENSSTAMEDCSLISATYSIGEEQLGTIAILGPTRMQYSRVISLLQLFTRQFTDGLKK.

The protein belongs to the HrcA family.

Its function is as follows. Negative regulator of class I heat shock genes (grpE-dnaK-dnaJ and groELS operons). Prevents heat-shock induction of these operons. This chain is Heat-inducible transcription repressor HrcA, found in Bacillus cereus (strain B4264).